Consider the following 215-residue polypeptide: LexA repressor (215 aa).

Residues 28–48 constitute a DNA-binding region (H-T-H motif); that stretch reads RAEIAAELGFSSPNAAEEHLR. Catalysis depends on for autocatalytic cleavage activity residues S133 and K170.

Belongs to the peptidase S24 family. As to quaternary structure, homodimer.

The catalysed reaction is Hydrolysis of Ala-|-Gly bond in repressor LexA.. Represses a number of genes involved in the response to DNA damage (SOS response), including recA and lexA. In the presence of single-stranded DNA, RecA interacts with LexA causing an autocatalytic cleavage which disrupts the DNA-binding part of LexA, leading to derepression of the SOS regulon and eventually DNA repair. The chain is LexA repressor from Burkholderia cenocepacia (strain HI2424).